The chain runs to 1273 residues: DNA-directed RNA polymerase subunit beta (1273 aa).

This sequence belongs to the RNA polymerase beta chain family. As to quaternary structure, the RNAP catalytic core consists of 2 alpha, 1 beta, 1 beta' and 1 omega subunit. When a sigma factor is associated with the core the holoenzyme is formed, which can initiate transcription.

The catalysed reaction is RNA(n) + a ribonucleoside 5'-triphosphate = RNA(n+1) + diphosphate. DNA-dependent RNA polymerase catalyzes the transcription of DNA into RNA using the four ribonucleoside triphosphates as substrates. This is DNA-directed RNA polymerase subunit beta from Phytoplasma mali (strain AT).